Reading from the N-terminus, the 419-residue chain is MKRLLVLSVLLAAVFGNENFVGHQVLRISATDEAQVQKVRELEELEHLKLDFWRDPARAGLPIDVRVPFPTIQSVKAFLEYHDISYEIMIEDVQSLLDEEKQQMSAFQARALSTDAFNYATYHTLDEIYEFMDLLVTEHPQLVSKIQIGSTFEGRPINVLKFSTGGTNRPAIWIDTGIHSREWVTQASGVWFAKKITKDYGQEPTLTAILDNMDIFLEIVTNPDGFVYTHKTNRMWRKTRSHTEGSLCVGVDPNRNWDAAFGMPGASSNPCSETYRGKFPNSEVEVKSIVDFVTSHGNIKAFISIHSYSQLLLYPYGYTSEPAPDKEELDQLAKSAVTALTSLHGTKFKYGSIIDTIYQASGSTIDWTYSQGIKYSFTFELRDTGLRGFLLPASQIIPTAEETWLALLTIMDHTVKHPY.

A signal peptide spans 1 to 16 (MKRLLVLSVLLAAVFG). Residues 17-110 (NENFVGHQVL…KQQMSAFQAR (94 aa)) constitute a propeptide, activation peptide. A Peptidase M14 domain is found at 121–414 (TYHTLDEIYE…LALLTIMDHT (294 aa)). Zn(2+) is bound by residues His179 and Glu182. Substrate contacts are provided by residues 179–182 (HSRE), Arg237, and 254–255 (NR). Residues Cys248 and Cys271 are joined by a disulfide bond. His306 contacts Zn(2+). Substrate contacts are provided by residues 307–308 (SY) and Tyr358. Catalysis depends on Glu380, which acts as the Proton donor/acceptor.

The protein belongs to the peptidase M14 family. As to quaternary structure, monomer. It depends on Zn(2+) as a cofactor.

It is found in the secreted. The enzyme catalyses Release of a C-terminal amino acid, but little or no action with -Asp, -Glu, -Arg, -Lys or -Pro.. Its function is as follows. Carboxypeptidase that catalyzes the release of a C-terminal amino acid, but has little or no action with -Asp, -Glu, -Arg, -Lys or -Pro. The sequence is that of Carboxypeptidase A1 (Cpa1) from Mus musculus (Mouse).